The following is a 1235-amino-acid chain: ATP-dependent helicase/nuclease subunit A (1235 aa).

A UvrD-like helicase ATP-binding domain is found at 12–482 (SLWTDDQWKA…IDLSQNFRSR (471 aa)). 33–40 (AAAGSGKT) contributes to the ATP binding site. The region spanning 509–800 (AAELTLGAKS…RMMTIHASKG (292 aa)) is the UvrD-like helicase C-terminal domain.

Belongs to the helicase family. AddA subfamily. In terms of assembly, heterodimer of AddA and AddB/RexB. It depends on Mg(2+) as a cofactor.

The catalysed reaction is Couples ATP hydrolysis with the unwinding of duplex DNA by translocating in the 3'-5' direction.. The enzyme catalyses ATP + H2O = ADP + phosphate + H(+). In terms of biological role, the heterodimer acts as both an ATP-dependent DNA helicase and an ATP-dependent, dual-direction single-stranded exonuclease. Recognizes the chi site generating a DNA molecule suitable for the initiation of homologous recombination. The AddA nuclease domain is required for chi fragment generation; this subunit has the helicase and 3' -&gt; 5' nuclease activities. This is ATP-dependent helicase/nuclease subunit A from Listeria monocytogenes serotype 4a (strain HCC23).